Here is a 330-residue protein sequence, read N- to C-terminus: Ketol-acid reductoisomerase (NADP(+)) (330 aa).

Residues 1 to 181 (MNVYYEKDAD…GGTKAGVIET (181 aa)) form the KARI N-terminal Rossmann domain. NADP(+) contacts are provided by residues 24–27 (YGSQ), R47, S50, S52, and 82–85 (DQNQ). Residue H107 is part of the active site. Residue G133 participates in NADP(+) binding. The KARI C-terminal knotted domain maps to 182–327 (NFKNETETDL…AKLRNMMSWL (146 aa)). Mg(2+)-binding residues include D190, E194, E226, and E230. S251 is a substrate binding site.

This sequence belongs to the ketol-acid reductoisomerase family. Mg(2+) is required as a cofactor.

The catalysed reaction is (2R)-2,3-dihydroxy-3-methylbutanoate + NADP(+) = (2S)-2-acetolactate + NADPH + H(+). The enzyme catalyses (2R,3R)-2,3-dihydroxy-3-methylpentanoate + NADP(+) = (S)-2-ethyl-2-hydroxy-3-oxobutanoate + NADPH + H(+). The protein operates within amino-acid biosynthesis; L-isoleucine biosynthesis; L-isoleucine from 2-oxobutanoate: step 2/4. It participates in amino-acid biosynthesis; L-valine biosynthesis; L-valine from pyruvate: step 2/4. Involved in the biosynthesis of branched-chain amino acids (BCAA). Catalyzes an alkyl-migration followed by a ketol-acid reduction of (S)-2-acetolactate (S2AL) to yield (R)-2,3-dihydroxy-isovalerate. In the isomerase reaction, S2AL is rearranged via a Mg-dependent methyl migration to produce 3-hydroxy-3-methyl-2-ketobutyrate (HMKB). In the reductase reaction, this 2-ketoacid undergoes a metal-dependent reduction by NADPH to yield (R)-2,3-dihydroxy-isovalerate. In Chlorobium chlorochromatii (strain CaD3), this protein is Ketol-acid reductoisomerase (NADP(+)).